The chain runs to 210 residues: Ion-translocating oxidoreductase complex subunit G (210 aa).

The helical transmembrane segment at 9-29 (SLVLALFAIAATALVTITYAL) threads the bilayer. T176 carries the FMN phosphoryl threonine modification.

Belongs to the RnfG family. As to quaternary structure, the complex is composed of six subunits: RnfA, RnfB, RnfC, RnfD, RnfE and RnfG. FMN serves as cofactor.

It is found in the cell inner membrane. Its function is as follows. Part of a membrane-bound complex that couples electron transfer with translocation of ions across the membrane. The chain is Ion-translocating oxidoreductase complex subunit G from Aliivibrio fischeri (strain MJ11) (Vibrio fischeri).